The chain runs to 258 residues: DNA repair protein RecO (258 aa).

This sequence belongs to the RecO family.

Its function is as follows. Involved in DNA repair and RecF pathway recombination. This chain is DNA repair protein RecO, found in Lactiplantibacillus plantarum (strain ATCC BAA-793 / NCIMB 8826 / WCFS1) (Lactobacillus plantarum).